The chain runs to 194 residues: Peptidyl-tRNA hydrolase (194 aa).

Residue Y16 participates in tRNA binding. Catalysis depends on H21, which acts as the Proton acceptor. The tRNA site is built by F67, N69, and N115.

It belongs to the PTH family. In terms of assembly, monomer.

The protein localises to the cytoplasm. The catalysed reaction is an N-acyl-L-alpha-aminoacyl-tRNA + H2O = an N-acyl-L-amino acid + a tRNA + H(+). In terms of biological role, hydrolyzes ribosome-free peptidyl-tRNAs (with 1 or more amino acids incorporated), which drop off the ribosome during protein synthesis, or as a result of ribosome stalling. Its function is as follows. Catalyzes the release of premature peptidyl moieties from peptidyl-tRNA molecules trapped in stalled 50S ribosomal subunits, and thus maintains levels of free tRNAs and 50S ribosomes. The sequence is that of Peptidyl-tRNA hydrolase from Shigella flexneri.